The primary structure comprises 223 residues: GTP cyclohydrolase 1 (223 aa).

Residues C114, H117, and C185 each coordinate Zn(2+).

Belongs to the GTP cyclohydrolase I family. As to quaternary structure, homomer.

The enzyme catalyses GTP + H2O = 7,8-dihydroneopterin 3'-triphosphate + formate + H(+). It participates in cofactor biosynthesis; 7,8-dihydroneopterin triphosphate biosynthesis; 7,8-dihydroneopterin triphosphate from GTP: step 1/1. The polypeptide is GTP cyclohydrolase 1 (Chlorobium phaeovibrioides (strain DSM 265 / 1930) (Prosthecochloris vibrioformis (strain DSM 265))).